Reading from the N-terminus, the 269-residue chain is Achromobactin transport ATP-binding protein CbrD (269 aa).

Positions 4–240 (ITSRELTLGY…ALVKTVFNLD (237 aa)) constitute an ABC transporter domain. ATP is bound at residue 36–43 (GSNGCGKS).

This sequence belongs to the ABC transporter superfamily.

It is found in the cell inner membrane. Part of the binding-protein-dependent transport system CbrABCD for uptake of the siderophore achromobactin. Probably responsible for energy coupling to the transport system. This chain is Achromobactin transport ATP-binding protein CbrD (cbrD), found in Dickeya dadantii (strain 3937) (Erwinia chrysanthemi (strain 3937)).